The sequence spans 724 residues: MQNNNFNTTEINNMINFPMYNGRLEPSLAPALIAVAPIAKYLATALAKWAVKQGFAKLKSEIFPGNTPATMDKVRIEVQTLLDQRLQDDRVKILEGEYKGIIDVSKVFTDYVNQSKFETGTANRLFFDTSNQLISRLPQFEIAGYEGVSISLFTQMCTFHLGLLKDGILAGSDWGFAPADKDALICQFNRFVNEYNTRLMVLYSKEFGRLLAKNLNEALNFRNMCSLYVFPFSEAWSLLRYEGTKLENTLSLWNFVGESINNISPNDWKGALYKLLMGAPNQRLNNVKFNYSYFSDTQATIHRENIHGVLPTYNGGPTITGWIGNGRFSGLSFPCSNELEITKIKQEITYNDKGGNFNSIVPAATRNEILTATVPTSADPFFKTADINWKYFSPGLYSGWNIKFDDTVTLKSRVPSIIPSNILKYDDYYIRAVSACPKGVSLAYNHDFLTLTYNKLEYDAPTTQNIIVGFSPDNTKSFYRSNSHYLSTTDDAYVIPALQFSTVSDRSFLEDTPDQATDGSIKFTDTVLGNEAKYSIRLNTGFNTATRYRLIIRFKAPARLAAGIRVRSQNSGNNKLLGGIPVEGNSGWIDYITDSFTFDDLGITTSSTNAFFSIDSDGVNASQQWYLSKLILVKESSFTTQIPLKPYVIVRCPDTFFVSNNSSSTYEQGYNNNYNQNSSSMYDQGYNNSYNPNSGCTCNQDYNNSYNQNSGCTCNQGYNNNYPK.

Belongs to the delta endotoxin family.

In terms of biological role, promotes colloidosmotic lysis by binding to the midgut epithelial cells of mosquitos. Active on Aedes aegypti, Culex pipiens and Anopheles stephensi larvae. This is Pesticidal crystal protein Cry11Ba (cry11Ba) from Bacillus thuringiensis subsp. jegathesan.